The primary structure comprises 1226 residues: DNA-directed RNA polymerase subunit beta (1226 aa).

Belongs to the RNA polymerase beta chain family. The RNAP catalytic core consists of 2 alpha, 1 beta, 1 beta' and 1 omega subunit. When a sigma factor is associated with the core the holoenzyme is formed, which can initiate transcription.

The enzyme catalyses RNA(n) + a ribonucleoside 5'-triphosphate = RNA(n+1) + diphosphate. In terms of biological role, DNA-dependent RNA polymerase catalyzes the transcription of DNA into RNA using the four ribonucleoside triphosphates as substrates. The sequence is that of DNA-directed RNA polymerase subunit beta from Leptospira interrogans serogroup Icterohaemorrhagiae serovar Lai (strain 56601).